Consider the following 657-residue polypeptide: 9-cis-epoxycarotenoid dioxygenase NCED9, chloroplastic (657 aa).

Positions 357, 406, 471, and 642 each coordinate Fe cation.

This sequence belongs to the carotenoid oxygenase family. Fe(2+) serves as cofactor. As to expression, expressed in developing siliques, embryo and endosperm.

It localises to the plastid. Its subcellular location is the chloroplast stroma. It carries out the reaction a 9-cis-epoxycarotenoid + O2 = a 12'-apo-carotenal + 2-cis,4-trans-xanthoxin. The enzyme catalyses 9-cis-violaxanthin + O2 = (3S,5R,6S)-5,6-epoxy-3-hydroxy-5,6-dihydro-12'-apo-beta-caroten-12'-al + 2-cis,4-trans-xanthoxin. It catalyses the reaction 9'-cis-neoxanthin + O2 = (3S,5R,6R)-3,5-dihydroxy-6,7-didehydro-5,6-dihydro-12'-apo-beta-caroten-12'-al + 2-cis,4-trans-xanthoxin. Has a 11,12(11',12') 9-cis epoxycarotenoid cleavage activity. Catalyzes the first step of abscisic-acid biosynthesis from carotenoids. Contributes probably to abscisic acid synthesis for the induction of seed dormancy. This Arabidopsis thaliana (Mouse-ear cress) protein is 9-cis-epoxycarotenoid dioxygenase NCED9, chloroplastic (NCED9).